Consider the following 83-residue polypeptide: Mu-theraphotoxin-Hhn2c (83 aa).

The first 21 residues, 1 to 21 (MKASMFLALAGLVLLFVVGYA), serve as a signal peptide directing secretion. The propeptide occupies 22-48 (SESEEKEFPIELLSKIFAVDVFKGEER). 3 disulfides stabilise this stretch: C50/C65, C57/C70, and C64/C77. Position 81 is a leucine amide (L81).

The protein belongs to the neurotoxin 10 (Hwtx-1) family. 15 (Hntx-3) subfamily. Monomer. In terms of tissue distribution, expressed by the venom gland.

It localises to the secreted. Functionally, lethal neurotoxin. Selectively blocks tetrodotoxin-sensitive voltage-gated sodium channels (Nav). Does not affect tetrodotoxin-resistant voltage-gated sodium channels or calcium channels. This chain is Mu-theraphotoxin-Hhn2c, found in Cyriopagopus hainanus (Chinese bird spider).